An 82-amino-acid polypeptide reads, in one-letter code: Protein C2 (82 aa).

This Sterkiella nova (Ciliate) protein is Protein C2 (C2).